The chain runs to 146 residues: Hemoglobin subunit beta (146 aa).

The Globin domain maps to 2–146 (HWTAEEKQLI…VAHALARKYH (145 aa)). The heme b site is built by histidine 63 and histidine 92.

It belongs to the globin family. In terms of assembly, heterotetramer of two alpha chains and two beta chains. As to expression, red blood cells.

Involved in oxygen transport from the lung to the various peripheral tissues. This chain is Hemoglobin subunit beta (HBB), found in Branta canadensis (Canada goose).